The following is a 170-amino-acid chain: uncharacterized protein (170 aa).

The chain crosses the membrane as a helical span at residues 96–116 (FSAISIGSFPIVLFLSLFFFD).

It localises to the membrane. This is an uncharacterized protein from Borreliella burgdorferi (strain ATCC 35210 / DSM 4680 / CIP 102532 / B31) (Borrelia burgdorferi).